We begin with the raw amino-acid sequence, 204 residues long: IMPACT family member YigZ (204 aa).

It belongs to the IMPACT family. Monomer.

This chain is IMPACT family member YigZ (yigZ), found in Escherichia coli (strain K12).